A 504-amino-acid polypeptide reads, in one-letter code: Calcium/calmodulin-dependent protein kinase type II (504 aa).

Residues 65 to 351 (YQLIENLGDG…IHQFFQHPWI (287 aa)) enclose the Protein kinase domain. ATP-binding positions include 71 to 79 (LGDGAFSQV) and Lys94. Catalysis depends on Asp188, which acts as the Proton acceptor. Thr252 is subject to Phosphothreonine.

This sequence belongs to the protein kinase superfamily. CAMK Ser/Thr protein kinase family. CaMK subfamily. In terms of assembly, interacts with sty1. Requires Mg(2+) as cofactor. Autophosphorylated.

It localises to the cytoplasm. It is found in the barrier septum. Its subcellular location is the forespore membrane. The protein localises to the ascus epiplasm. It catalyses the reaction L-seryl-[protein] + ATP = O-phospho-L-seryl-[protein] + ADP + H(+). The catalysed reaction is L-threonyl-[protein] + ATP = O-phospho-L-threonyl-[protein] + ADP + H(+). Its function is as follows. Has a role in the regulation of G2/M transition during the mitotic cell cycle. This chain is Calcium/calmodulin-dependent protein kinase type II, found in Schizosaccharomyces pombe (strain 972 / ATCC 24843) (Fission yeast).